Consider the following 542-residue polypeptide: Chaperonin GroEL 3 (542 aa).

Residues threonine 30–proline 33, lysine 51, aspartate 87–threonine 91, glycine 415, and aspartate 496 each bind ATP.

It belongs to the chaperonin (HSP60) family. As to quaternary structure, forms a cylinder of 14 subunits composed of two heptameric rings stacked back-to-back. Interacts with the co-chaperonin GroES.

It is found in the cytoplasm. The enzyme catalyses ATP + H2O + a folded polypeptide = ADP + phosphate + an unfolded polypeptide.. Together with its co-chaperonin GroES, plays an essential role in assisting protein folding. The GroEL-GroES system forms a nano-cage that allows encapsulation of the non-native substrate proteins and provides a physical environment optimized to promote and accelerate protein folding. The chain is Chaperonin GroEL 3 from Sinorhizobium medicae (strain WSM419) (Ensifer medicae).